Reading from the N-terminus, the 247-residue chain is Putative ankyrin repeat protein RBE_1110 (247 aa).

ANK repeat units lie at residues 105 to 135 (QNKDVFYQAVMSNKKKLVKKILSYNPKCIDY) and 139 to 171 (EGHNVLHIALKNKAKADAEMIEILLQCKPKLIT).

This chain is Putative ankyrin repeat protein RBE_1110, found in Rickettsia bellii (strain RML369-C).